The chain runs to 104 residues: UPF0213 protein YsiG (104 aa).

Positions Asn2 to Leu79 constitute a GIY-YIG domain.

It belongs to the UPF0213 family.

The polypeptide is UPF0213 protein YsiG (ysiG) (Lactococcus lactis subsp. lactis (strain IL1403) (Streptococcus lactis)).